The chain runs to 351 residues: Rhodopsin (351 aa).

The Extracellular segment spans residues methionine 1 to alanine 36. N-linked (GlcNAc...) asparagine glycans are attached at residues asparagine 2 and asparagine 15. Residues tyrosine 37–valine 61 traverse the membrane as a helical segment. Residues threonine 62–asparagine 73 lie on the Cytoplasmic side of the membrane. A helical transmembrane segment spans residues tyrosine 74–tyrosine 96. Over threonine 97–cysteine 110 the chain is Extracellular. Cysteines 110 and 187 form a disulfide. A helical transmembrane segment spans residues asparagine 111–isoleucine 133. Residues glutamate 134–tryptophan 136 carry the 'Ionic lock' involved in activated form stabilization motif. The Cytoplasmic segment spans residues glutamate 134–histidine 152. Residues alanine 153–valine 173 form a helical membrane-spanning segment. Residues glycine 174 to serine 202 are Extracellular-facing. An N-linked (GlcNAc...) asparagine glycan is attached at asparagine 200. A helical transmembrane segment spans residues phenylalanine 203–glycine 224. Topologically, residues arginine 225–arginine 252 are cytoplasmic. Residues methionine 253 to phenylalanine 274 form a helical membrane-spanning segment. Over isoleucine 275–leucine 286 the chain is Extracellular. The helical transmembrane segment at phenylalanine 287 to cysteine 308 threads the bilayer. Lysine 296 carries the N6-(retinylidene)lysine modification. The Cytoplasmic portion of the chain corresponds to methionine 309 to alanine 351. The S-palmitoyl cysteine moiety is linked to residue cysteine 323. The segment at glycine 330 to alanine 351 is disordered. Residues alanine 335–alanine 351 show a composition bias toward low complexity.

The protein belongs to the G-protein coupled receptor 1 family. Opsin subfamily. Post-translationally, phosphorylated on some or all of the serine and threonine residues present in the C-terminal region. Contains one covalently linked retinal chromophore.

It localises to the membrane. It is found in the cell projection. The protein resides in the cilium. The protein localises to the photoreceptor outer segment. In terms of biological role, photoreceptor required for image-forming vision at low light intensity. While most salt water fish species use retinal as chromophore, most freshwater fish use 3-dehydroretinal, or a mixture of retinal and 3-dehydroretinal. Light-induced isomerization of 11-cis to all-trans retinal triggers a conformational change that activates signaling via G-proteins. Subsequent receptor phosphorylation mediates displacement of the bound G-protein alpha subunit by arrestin and terminates signaling. In Sargocentron diadema (Crown squirrelfish), this protein is Rhodopsin (rho).